The chain runs to 508 residues: Photosystem II CP47 reaction center protein (508 aa).

The next 6 membrane-spanning stretches (helical) occupy residues 21 to 36 (SVHI…WAGS), 101 to 115 (IVFS…IWHW), 140 to 156 (GIHL…FGAF), 203 to 218 (IAAG…FHLS), 237 to 252 (VLSS…AFVV), and 457 to 472 (SFAL…HGAR).

The protein belongs to the PsbB/PsbC family. PsbB subfamily. PSII is composed of 1 copy each of membrane proteins PsbA, PsbB, PsbC, PsbD, PsbE, PsbF, PsbH, PsbI, PsbJ, PsbK, PsbL, PsbM, PsbT, PsbX, PsbY, PsbZ, Psb30/Ycf12, at least 3 peripheral proteins of the oxygen-evolving complex and a large number of cofactors. It forms dimeric complexes. Binds multiple chlorophylls. PSII binds additional chlorophylls, carotenoids and specific lipids. is required as a cofactor.

It is found in the plastid. It localises to the chloroplast thylakoid membrane. Functionally, one of the components of the core complex of photosystem II (PSII). It binds chlorophyll and helps catalyze the primary light-induced photochemical processes of PSII. PSII is a light-driven water:plastoquinone oxidoreductase, using light energy to abstract electrons from H(2)O, generating O(2) and a proton gradient subsequently used for ATP formation. The protein is Photosystem II CP47 reaction center protein of Illicium oligandrum (Star anise).